A 298-amino-acid chain; its full sequence is Syntaxin-4 (298 aa).

Over 1–274 the chain is Cytoplasmic; the sequence is MRDRTHELRQ…NQKKARKKKV (274 aa). Phosphoserine is present on residues Ser-15, Ser-29, Ser-36, Ser-117, Ser-208, and Ser-248. Residues 38 to 163 adopt a coiled-coil conformation; that stretch reads DDEFFQKVQT…ERIRRQLKIT (126 aa). The interval 154-298 is interaction with CENPF; sequence ERIRRQLKIT…VIIGITITVG (145 aa). The t-SNARE coiled-coil homology domain occupies 200–262; it reads LNEISARHSE…ERGQEHVKIA (63 aa). Residues 275-295 traverse the membrane as a helical; Anchor for type IV membrane protein segment; that stretch reads MIAICVSVTVLILAVIIGITI. Residues 296–298 lie on the Extracellular side of the membrane; it reads TVG.

Belongs to the syntaxin family. Interacts with STXBP6. Component of the SNARE complex composed of STX4, SNAP23 and VAMP7 that interacts with SYT7 during lysosomal exocytosis. Found in a complex with VAMP8 and SNAP23. Detected in a complex with SNAP23 and STXBP4. Interacts with VAMP2. Interacts with SNAP23 and SNAPIN. Interacts with LLGL1. Interacts (via C-terminus) with CENPF. Interacts with DOC2B. Interacts with STXBP3; excludes interaction with DOC2B and SNAP25. Interacts with STXBP4; excludes interaction with VAMP2. Interacts with STXBP5L. Expressed in the outer and inner hair cells of the cochlea.

It is found in the cell membrane. Its subcellular location is the cell projection. The protein resides in the neuron projection. The protein localises to the stereocilium. Plasma membrane t-SNARE that mediates docking of transport vesicles. Necessary for the translocation of SLC2A4 from intracellular vesicles to the plasma membrane. In neurons, recruited at neurite tips to membrane domains rich in the phospholipid 1-oleoyl-2-palmitoyl-PC (OPPC) which promotes neurite tip surface expression of the dopamine transporter SLC6A3/DAT by facilitating fusion of SLC6A3-containing transport vesicles with the plasma membrane. Together with STXB3 and VAMP2, may also play a role in docking/fusion of intracellular GLUT4-containing vesicles with the cell surface in adipocytes and in docking of synaptic vesicles at presynaptic active zones. Required for normal hearing. The protein is Syntaxin-4 (Stx4) of Mus musculus (Mouse).